Reading from the N-terminus, the 1457-residue chain is ABC transporter G family member 36 (1457 aa).

The segment at 14–43 (RLGGSMRGDSGSMWRRGDDVFSRSSREEDD) is disordered. Basic and acidic residues predominate over residues 28–39 (RRGDDVFSRSSR). Residues 164–437 (GNALGILPNR…FESMGFKCPD (274 aa)) form the ABC transporter 1 domain. An ATP-binding site is contributed by 197–204 (GPPGSGKT). One can recognise an ABC transmembrane type-2 1 domain in the interval 515–728 (ELLKANIDRE…AQNAISVNEL (214 aa)). The next 7 helical transmembrane spans lie at 533-553 (FVYMFRTFQLMVVSLIAMTLF), 565-585 (SGGIYMGALFFGVLMIMFNGF), 621-641 (IPITFIEVGGYVFLTYYVIGF), 653-673 (LLMLAINQMAGSLFRFIGGAA), 677-697 (IVANVFASFMLLIFMVLGGFI), 706-726 (WWIWGYWISPMMYAQNAISVN), and 765-785 (IGFGAMIGFTILFNALFTLAL). The segment at 821–841 (SSGSTRRPMGNGTENDSTIVD) is disordered. Residues 860 to 1112 (LSFDNVRYSV…ELIKYFESIP (253 aa)) form the ABC transporter 2 domain. Position 905–912 (905–912 (GVSGAGKT)) interacts with ATP. The ABC transmembrane type-2 2 domain maps to 1185–1399 (TQCMACLWKQ…TLYGLVVSQF (215 aa)). A run of 7 helical transmembrane segments spans residues 1209–1229 (FFFTTVIALLFGTIFWDLGGK), 1244–1264 (YAAVLFIGVMNCTSVQPVVAV), 1292–1312 (IPYTLVQATVYGIIVYAMIGF), 1319–1339 (FFWYLFFMVFTLLYFTFYGMM), 1349–1369 (IASIVSSAFYAIWNLFSGFVI), 1380–1400 (WYCWACPVAWTLYGLVVSQFG), and 1429–1449 (WVATVVAAFAFLFASLFGFAI).

This sequence belongs to the ABC transporter superfamily. ABCG family. PDR (TC 3.A.1.205) subfamily.

Its subcellular location is the membrane. May be a general defense protein. The sequence is that of ABC transporter G family member 36 from Oryza sativa subsp. japonica (Rice).